The chain runs to 453 residues: Alpha-glucosidase (453 aa).

3 to 69 lines the NAD(+) pocket; that stretch reads TKIVLVGAGS…LPFIVSATTD (67 aa). Substrate is bound at residue Asn-149. Position 171 (Cys-171) interacts with Mn(2+). Catalysis depends on His-172, which acts as the Proton donor. His-201 contacts Mn(2+).

Homotetramer. Mn(2+) serves as cofactor. The cofactor is Co(2+). Ca(2+) is required as a cofactor. It depends on Fe(2+) as a cofactor. Requires Mg(2+) as cofactor. Sr(2+) serves as cofactor. The cofactor is Ni(2+). NAD(+) is required as a cofactor.

The catalysed reaction is Hydrolysis of terminal, non-reducing (1-&gt;4)-linked alpha-D-glucose residues with release of alpha-D-glucose.. The protein operates within glycan degradation; palatinose degradation. With respect to regulation, is inhibited by EDTA in vitro. Functionally, alpha-glucosidase with broad specificity. Hydrolyzes maltose, palatinose, maltulose, trehalose, trehalulose, turanose, leucrose, sucrose and maltitol. Is not active against alpha-galactosides, e.g. melibiose, and alpha-mannosides. Shows an obligate requirement for an O-alpha-glycosidic linkage, since it is not able to cleave beta-glycosidic bonds (cellobiose, gentiobiose, lactose, sophorose or laminaribiose). Cannot hydrolyze phosphorylated alpha-glucosides derivatives. Seems to be involved in the degradation of palatinose, a sucrose isomer that is formed as a reserve material under conditions of excess carbon availability, sequestered in a form unavailable to competitors such as fungi or the host plant, and whose consumption appears to be postponed until the preferentially metabolized carbon source (e.g. sucrose) is depleted. The protein is Alpha-glucosidase (palH) of Erwinia rhapontici (Pectobacterium rhapontici).